Reading from the N-terminus, the 128-residue chain is Putative lipid-binding protein At4g00165 (128 aa).

The N-terminal stretch at Met-1–Gly-23 is a signal peptide. 4 cysteine pairs are disulfide-bonded: Cys-34/Cys-90, Cys-46/Cys-76, Cys-56/Cys-75, and Cys-92/Cys-128.

This sequence belongs to the plant LTP family. PEARLI1 subfamily.

It localises to the secreted. The protein is Putative lipid-binding protein At4g00165 of Arabidopsis thaliana (Mouse-ear cress).